Consider the following 142-residue polypeptide: Large ribosomal subunit protein uL11 (142 aa).

The protein belongs to the universal ribosomal protein uL11 family. Part of the ribosomal stalk of the 50S ribosomal subunit. Interacts with L10 and the large rRNA to form the base of the stalk. L10 forms an elongated spine to which L12 dimers bind in a sequential fashion forming a multimeric L10(L12)X complex. In terms of processing, one or more lysine residues are methylated.

Functionally, forms part of the ribosomal stalk which helps the ribosome interact with GTP-bound translation factors. The chain is Large ribosomal subunit protein uL11 from Enterobacter sp. (strain 638).